A 149-amino-acid polypeptide reads, in one-letter code: Calmodulin-1 (149 aa).

EF-hand domains lie at 8–43 (EQISEFKEAFSLFDKDGDGCITTKELGTVMRSLGQN), 44–79 (PTEAELQDMINEVDADGNGTIDFPEFLNLMAKKMKD), 81–116 (DSEEELKEAFRVFDKDQNGFISAAELRHVMTNLGEK), and 117–149 (LTDEEVEEMIREADVDGDGQINYEEFVKIMMAK). Residues Asp21, Asp23, Asp25, Cys27, Glu32, Asp57, Asp59, Asn61, Thr63, Glu68, Asp94, Asp96, Asn98, Glu105, Asp130, Asp132, Asp134, Gln136, and Glu141 each contribute to the Ca(2+) site.

This sequence belongs to the calmodulin family. In terms of assembly, interacts with ZAR1 (via CaMBD domain). Binds to IQD1. Binds to MEE62 in a calcium-dependent manner.

The protein localises to the cytoplasm. It localises to the cell membrane. Its function is as follows. Calmodulin mediates the control of a large number of enzymes, ion channels and other proteins by Ca(2+). Among the enzymes to be stimulated by the calmodulin-Ca(2+) complex are a number of protein kinases and phosphatases. The protein is Calmodulin-1 (CAM1) of Arabidopsis thaliana (Mouse-ear cress).